The sequence spans 353 residues: Protein RecA (353 aa).

Residue 67 to 74 (GPESSGKT) coordinates ATP.

It belongs to the RecA family.

The protein localises to the cytoplasm. In terms of biological role, can catalyze the hydrolysis of ATP in the presence of single-stranded DNA, the ATP-dependent uptake of single-stranded DNA by duplex DNA, and the ATP-dependent hybridization of homologous single-stranded DNAs. It interacts with LexA causing its activation and leading to its autocatalytic cleavage. This is Protein RecA from Shewanella loihica (strain ATCC BAA-1088 / PV-4).